The primary structure comprises 336 residues: Formimidoylglutamase (336 aa).

Positions 129, 160, 162, 164, 257, and 259 each coordinate Mn(2+).

The protein belongs to the arginase family. Requires Mn(2+) as cofactor.

The enzyme catalyses N-formimidoyl-L-glutamate + H2O = formamide + L-glutamate. It functions in the pathway amino-acid degradation; L-histidine degradation into L-glutamate; L-glutamate from N-formimidoyl-L-glutamate (hydrolase route): step 1/1. Its function is as follows. Catalyzes the conversion of N-formimidoyl-L-glutamate to L-glutamate and formamide. This is Formimidoylglutamase from Vibrio vulnificus (strain YJ016).